Reading from the N-terminus, the 457-residue chain is Argininosuccinate lyase (457 aa).

The protein belongs to the lyase 1 family. Argininosuccinate lyase subfamily.

The protein localises to the cytoplasm. It carries out the reaction 2-(N(omega)-L-arginino)succinate = fumarate + L-arginine. It participates in amino-acid biosynthesis; L-arginine biosynthesis; L-arginine from L-ornithine and carbamoyl phosphate: step 3/3. The sequence is that of Argininosuccinate lyase from Haemophilus influenzae (strain 86-028NP).